Reading from the N-terminus, the 333-residue chain is Tryptophan--tRNA ligase (333 aa).

ATP contacts are provided by residues 9–11 and 17–18; these read QPT and GN. The 'HIGH' region signature appears at 10–18; the sequence is PTNNLTLGN. D140 is an L-tryptophan binding site. ATP is bound by residues 152–154, I191, and 200–204; these read GQD and KMSKS. The short motif at 200 to 204 is the 'KMSKS' region element; it reads KMSKS.

This sequence belongs to the class-I aminoacyl-tRNA synthetase family. In terms of assembly, homodimer.

Its subcellular location is the cytoplasm. The enzyme catalyses tRNA(Trp) + L-tryptophan + ATP = L-tryptophyl-tRNA(Trp) + AMP + diphosphate + H(+). In terms of biological role, catalyzes the attachment of tryptophan to tRNA(Trp). The sequence is that of Tryptophan--tRNA ligase from Ureaplasma parvum serovar 3 (strain ATCC 700970).